We begin with the raw amino-acid sequence, 257 residues long: Aspartate/glutamate leucyltransferase (257 aa).

Belongs to the R-transferase family. Bpt subfamily.

The protein resides in the cytoplasm. It catalyses the reaction N-terminal L-glutamyl-[protein] + L-leucyl-tRNA(Leu) = N-terminal L-leucyl-L-glutamyl-[protein] + tRNA(Leu) + H(+). The catalysed reaction is N-terminal L-aspartyl-[protein] + L-leucyl-tRNA(Leu) = N-terminal L-leucyl-L-aspartyl-[protein] + tRNA(Leu) + H(+). Functionally, functions in the N-end rule pathway of protein degradation where it conjugates Leu from its aminoacyl-tRNA to the N-termini of proteins containing an N-terminal aspartate or glutamate. The chain is Aspartate/glutamate leucyltransferase from Rhodopseudomonas palustris (strain BisB5).